The sequence spans 3342 residues: Large tegument protein deneddylase (3342 aa).

The tract at residues 1–302 is deubiquitination activity; that stretch reads MTDSTDSRQA…SRIYGTSDIV (302 aa). The region spanning 78–298 is the Peptidase C76 domain; that stretch reads VAVGIRNQFA…ISTVSRIYGT (221 aa). Catalysis depends on residues Cys-98, Asp-232, and His-234. Positions 472–554 are disordered; the sequence is RRPLWTPQSS…SPTTSNRGED (83 aa). Residues 480–494 show a composition bias toward low complexity; that stretch reads SSSENISLDGSSSSL. Positions 514–526 are enriched in polar residues; it reads VTSTESSDVTENV. Residues 630-656 are interaction with inner tegument protein; it reads LYVCMMDIFARLFNYIIENGARTTSDR. 3 disordered regions span residues 2584-2603, 2654-2987, and 3196-3279; these read DGDA…TYAD, PQIG…SRKH, and PKHD…SSTS. 5 stretches are compositionally biased toward pro residues: residues 2701-2743, 2751-2777, 2785-2799, 2823-2837, and 2845-2897; these read TPAP…PKPK, KPSP…PKPK, KPTP…SKPK, and KPTP…PKPK. The span at 2911-2947 shows a compositional bias: polar residues; that stretch reads NSDSKTSPVPNPNTFSASKIPPTSSIAEETKPCQSNL. Over residues 3264–3279 the composition is skewed to low complexity; the sequence is HVSGSTDTTTDGSSTS.

Belongs to the herpesviridae large tegument protein family. In terms of assembly, interacts with host CUL1 and CUL4A; these interactions inhibit the E3 ligase activity of cullins. Interacts with inner tegument protein. Interacts with capsid vertex specific component CVC2. Interacts with the major capsid protein/MCP.

The protein localises to the virion tegument. It localises to the host cytoplasm. The protein resides in the host nucleus. The enzyme catalyses Thiol-dependent hydrolysis of ester, thioester, amide, peptide and isopeptide bonds formed by the C-terminal Gly of ubiquitin (a 76-residue protein attached to proteins as an intracellular targeting signal).. Functionally, large tegument protein that plays multiple roles in the viral cycle. During viral entry, remains associated with the capsid while most of the tegument is detached and participates in the capsid transport toward the host nucleus. Plays a role in the routing of the capsid at the nuclear pore complex and subsequent uncoating. Within the host nucleus, acts as a deneddylase and promotes the degradation of nuclear CRLs (cullin-RING ubiquitin ligases) and thereby stabilizes nuclear CRL substrates, while cytoplasmic CRLs remain unaffected. These modifications prevent host cell cycle S-phase progression and create a favorable environment allowing efficient viral genome replication. Participates later in the secondary envelopment of capsids. Indeed, plays a linker role for the association of the outer viral tegument to the capsids together with the inner tegument protein. In Gallus gallus (Chicken), this protein is Large tegument protein deneddylase (MDV049).